We begin with the raw amino-acid sequence, 138 residues long: Small ribosomal subunit protein uS11c (138 aa).

A disordered region spans residues 1–24 (MTKPIPRIGSRKNGRISSRKNGRR). Residues 9-24 (GSRKNGRISSRKNGRR) are compositionally biased toward basic residues.

It belongs to the universal ribosomal protein uS11 family. As to quaternary structure, part of the 30S ribosomal subunit.

The protein resides in the plastid. It is found in the chloroplast. The chain is Small ribosomal subunit protein uS11c from Chloranthus spicatus (Chulantree).